The following is a 102-amino-acid chain: RNA-binding protein Hfq (102 aa).

The Sm domain occupies 9–68; sequence DPFLNALRRERVPVSIYLVNGIKLQGQIESFDQFVILLKNTVSQMVYKHAISTVVPSRPV. Residues 63–102 form a disordered region; that stretch reads VPSRPVSHHSNNAGGGSNNYHHSNNAQPSSAASQDSEDAE. The span at 70–96 shows a compositional bias: low complexity; it reads HHSNNAGGGSNNYHHSNNAQPSSAASQ.

It belongs to the Hfq family. Homohexamer.

Its function is as follows. RNA chaperone that binds small regulatory RNA (sRNAs) and mRNAs to facilitate mRNA translational regulation in response to envelope stress, environmental stress and changes in metabolite concentrations. Also binds with high specificity to tRNAs. This chain is RNA-binding protein Hfq, found in Cronobacter sakazakii (strain ATCC BAA-894) (Enterobacter sakazakii).